The sequence spans 349 residues: Peroxidase 23 (349 aa).

An N-terminal signal peptide occupies residues methionine 1 to alanine 29. At glutamine 30 the chain carries Pyrrolidone carboxylic acid. 4 cysteine pairs are disulfide-bonded: cysteine 40/cysteine 120, cysteine 73/cysteine 78, cysteine 126/cysteine 329, and cysteine 206/cysteine 238. The Proton acceptor role is filled by histidine 71. The Ca(2+) site is built by aspartate 72, valine 75, glycine 77, aspartate 79, and serine 81. N-linked (GlcNAc...) asparagine glycosylation occurs at asparagine 86. Proline 168 is a binding site for substrate. Histidine 199 contacts heme b. Residue threonine 200 participates in Ca(2+) binding. Residues asparagine 217 and asparagine 243 are each glycosylated (N-linked (GlcNAc...) asparagine). The Ca(2+) site is built by aspartate 251, threonine 254, and aspartate 259.

This sequence belongs to the peroxidase family. Classical plant (class III) peroxidase subfamily. Heme b serves as cofactor. Requires Ca(2+) as cofactor.

Its subcellular location is the secreted. It is found in the vacuole. The enzyme catalyses 2 a phenolic donor + H2O2 = 2 a phenolic radical donor + 2 H2O. In terms of biological role, removal of H(2)O(2), oxidation of toxic reductants, biosynthesis and degradation of lignin, suberization, auxin catabolism, response to environmental stresses such as wounding, pathogen attack and oxidative stress. These functions might be dependent on each isozyme/isoform in each plant tissue. This chain is Peroxidase 23 (PER23), found in Arabidopsis thaliana (Mouse-ear cress).